Consider the following 227-residue polypeptide: Large ribosomal subunit protein uL3 (227 aa).

Residues 129–154 (GMQPVSHGQSDRTRSRGSSGAQGPQK) form a disordered region.

This sequence belongs to the universal ribosomal protein uL3 family. As to quaternary structure, part of the 50S ribosomal subunit. Forms a cluster with proteins L14 and L19.

In terms of biological role, one of the primary rRNA binding proteins, it binds directly near the 3'-end of the 23S rRNA, where it nucleates assembly of the 50S subunit. This Endomicrobium trichonymphae protein is Large ribosomal subunit protein uL3.